The sequence spans 615 residues: ATP-dependent zinc metalloprotease FtsH 2 (615 aa).

Residues 1-7 (MNEPNRN) lie on the Cytoplasmic side of the membrane. The chain crosses the membrane as a helical span at residues 8-28 (FFWIFFLILGIFWLQSVWFGS). Topologically, residues 29 to 99 (RTVQQIPYSQ…VTYRREIENT (71 aa)) are periplasmic. The chain crosses the membrane as a helical span at residues 100–120 (FFRDLLSWVVPALIFVAVFLY). Over 121–615 (FSRKFAEKGG…APQRERDLSV (495 aa)) the chain is Cytoplasmic. 195–202 (GPPGTGKT) serves as a coordination point for ATP. Zn(2+) is bound at residue histidine 418. Glutamate 419 is an active-site residue. Histidine 422 and aspartate 495 together coordinate Zn(2+).

In the central section; belongs to the AAA ATPase family. This sequence in the C-terminal section; belongs to the peptidase M41 family. In terms of assembly, homohexamer. Zn(2+) serves as cofactor.

The protein localises to the cell inner membrane. In terms of biological role, acts as a processive, ATP-dependent zinc metallopeptidase for both cytoplasmic and membrane proteins. Plays a role in the quality control of integral membrane proteins. The chain is ATP-dependent zinc metalloprotease FtsH 2 from Bdellovibrio bacteriovorus (strain ATCC 15356 / DSM 50701 / NCIMB 9529 / HD100).